We begin with the raw amino-acid sequence, 208 residues long: uncharacterized protein (208 aa).

A disordered region spans residues 124–208 (KKTGSSNART…PSFGKYSSLA (85 aa)). Residues 133–170 (TPDEGKKAKNAPEEEKVKTSGSEDAKGEESAVEGKEPE) show a composition bias toward basic and acidic residues.

The protein resides in the golgi apparatus. This is an uncharacterized protein from Encephalitozoon cuniculi (strain GB-M1) (Microsporidian parasite).